We begin with the raw amino-acid sequence, 438 residues long: Iroquois-class homeodomain protein IRX-6 (438 aa).

A DNA-binding region (homeobox) is located at residues 143-205; that stretch reads SAGRRKNATR…NARRRLKKEN (63 aa). Disordered regions lie at residues 205–270 and 388–438; these read NKMT…EAAV and PRDS…GAEG. The segment covering 214–223 has biased composition (basic and acidic residues); it reads KGGEERKADS. The span at 252-268 shows a compositional bias: acidic residues; it reads LEDLEEEEEEEEAEEEA.

This sequence belongs to the TALE/IRO homeobox family. In terms of tissue distribution, expressed in a subset of retinal ganglion cells and bipolar cells; including in type 2 and type 3a bipolar cells.

It is found in the nucleus. Transcription factor. Binds to the iroquois binding site (IBS) motif of target genes to regulate gene expression; functions as a transcriptional activator or repressor. Modulates expression of RCVRN, VSX1, BHLHE22/BHLHB5 and TACR3/Nk3r. Required downstream of retinal bipolar cell specification for the terminal differentiation of type 2, type 3a and possibly type 6 bipolar cells. The polypeptide is Iroquois-class homeodomain protein IRX-6 (Irx6) (Mus musculus (Mouse)).